The following is a 309-amino-acid chain: Protein FdhE homolog (309 aa).

This sequence belongs to the FdhE family.

It localises to the cytoplasm. Functionally, necessary for formate dehydrogenase activity. The sequence is that of Protein FdhE homolog from Klebsiella pneumoniae (strain 342).